We begin with the raw amino-acid sequence, 178 residues long: Acireductone dioxygenase (178 aa).

Positions 81, 83, 87, and 126 each coordinate Fe(2+). Ni(2+) contacts are provided by His-81, His-83, Glu-87, and His-126.

It belongs to the acireductone dioxygenase (ARD) family. It depends on Fe(2+) as a cofactor. Requires Ni(2+) as cofactor.

It localises to the cytoplasm. The protein localises to the nucleus. The catalysed reaction is 1,2-dihydroxy-5-(methylsulfanyl)pent-1-en-3-one + O2 = 4-methylsulfanyl-2-oxobutanoate + formate + 2 H(+). It carries out the reaction 1,2-dihydroxy-5-(methylsulfanyl)pent-1-en-3-one + O2 = 3-(methylsulfanyl)propanoate + CO + formate + 2 H(+). Its pathway is amino-acid biosynthesis; L-methionine biosynthesis via salvage pathway; L-methionine from S-methyl-5-thio-alpha-D-ribose 1-phosphate: step 5/6. Functionally, catalyzes 2 different reactions between oxygen and the acireductone 1,2-dihydroxy-3-keto-5-methylthiopentene (DHK-MTPene) depending upon the metal bound in the active site. Fe-containing acireductone dioxygenase (Fe-ARD) produces formate and 2-keto-4-methylthiobutyrate (KMTB), the alpha-ketoacid precursor of methionine in the methionine recycle pathway. Ni-containing acireductone dioxygenase (Ni-ARD) produces methylthiopropionate, carbon monoxide and formate, and does not lie on the methionine recycle pathway. In Neurospora crassa (strain ATCC 24698 / 74-OR23-1A / CBS 708.71 / DSM 1257 / FGSC 987), this protein is Acireductone dioxygenase (adi1).